A 267-amino-acid polypeptide reads, in one-letter code: MIILIDSGNSRLKVGWFDPDAPQAAREPAPVAFDNLDLDALGRWLATLPRRPQRALGVNVAGLARGEAIAATLRAGGCDIRWLRAQPLAMGLRNGYRNPDQLGADRWACMVGVLARQPSVHPPLLVASFGTATTLDTIGPDNVFPGGLILPGPAMMRGALAYGTAHLPLADGLVADYPIDTHQAIASGIAAAQAGAIVRQWLAGRQRYGQAPEIYVAGGGWPEVRQEAERLLAVTGAAFGATPQPTYLDSPVLDGLAALAAQGAPTA.

6-13 (DSGNSRLK) serves as a coordination point for ATP. Substrate contacts are provided by residues Tyr-96 and 103-106 (GADR). The active-site Proton acceptor is the Asp-105. Thr-131 serves as a coordination point for ATP. Thr-181 provides a ligand contact to substrate.

It belongs to the type III pantothenate kinase family. Homodimer. Requires NH4(+) as cofactor. K(+) serves as cofactor.

It is found in the cytoplasm. It catalyses the reaction (R)-pantothenate + ATP = (R)-4'-phosphopantothenate + ADP + H(+). Its pathway is cofactor biosynthesis; coenzyme A biosynthesis; CoA from (R)-pantothenate: step 1/5. Functionally, catalyzes the phosphorylation of pantothenate (Pan), the first step in CoA biosynthesis. In terms of biological role, activates transcription of the pertussis toxin operon in a BvgAS-dependent manner. May interact with the alpha subunit of RNA polymerase. The sequence is that of Type III pantothenate kinase (coaX) from Bordetella pertussis (strain Tohama I / ATCC BAA-589 / NCTC 13251).